The following is a 326-amino-acid chain: MMGALCALAVTQAGLILAAPALRAYWPFSWYYHVVFRTVLQDTQRHRWKYWATPAFYAGVYAYCVWLFYGEVYAEIAKALWVPERWVLPAAVVAPAAAGVAAAATPAAVPADAAYDGLLFHDGVECRTCRVRKPARSRHCGVCGRCVPLADHHCVWLNNCVGRGNYGLFYLALGAHCALLTYGAVRLPLAAPAGRWPRALLALELLVASFAVLCVWFTATQVALVRDGMTTNEQDKWYAVQESMREGTLVRLRGRFYHRVEGGDGVEFYSTNAYDHRTYALHNEPYAVVTSHEEIPNVYDTGSFCENLRQRLDPQARIFRRRVRGL.

A topological domain (lumenal) is located at residue methionine 1. The helical transmembrane segment at 2–22 (MGALCALAVTQAGLILAAPAL) threads the bilayer. At 23–49 (RAYWPFSWYYHVVFRTVLQDTQRHRWK) the chain is on the cytoplasmic side. A helical membrane pass occupies residues 50–70 (YWATPAFYAGVYAYCVWLFYG). Over 71–85 (EVYAEIAKALWVPER) the chain is Lumenal. A helical membrane pass occupies residues 86–106 (WVLPAAVVAPAAAGVAAAATP). Topologically, residues 107–164 (AAVPADAAYDGLLFHDGVECRTCRVRKPARSRHCGVCGRCVPLADHHCVWLNNCVGRG) are cytoplasmic. One can recognise a DHHC domain in the interval 124 to 174 (VECRTCRVRKPARSRHCGVCGRCVPLADHHCVWLNNCVGRGNYGLFYLALG). A helical membrane pass occupies residues 165-185 (NYGLFYLALGAHCALLTYGAV). Residues 186-198 (RLPLAAPAGRWPR) are Lumenal-facing. The chain crosses the membrane as a helical span at residues 199–219 (ALLALELLVASFAVLCVWFTA). At 220 to 326 (TQVALVRDGM…RIFRRRVRGL (107 aa)) the chain is on the cytoplasmic side.

The protein belongs to the DHHC palmitoyltransferase family. SWF1 subfamily.

The protein resides in the endoplasmic reticulum membrane. It catalyses the reaction L-cysteinyl-[protein] + hexadecanoyl-CoA = S-hexadecanoyl-L-cysteinyl-[protein] + CoA. Its function is as follows. Palmitoyltransferase that targets several endosomal SNAREs. Palmitoylates the SNAREs at cysteine residues close to the cytoplasmic end of their transmembrane domain. May have a role in the cellular quality control of transmembrane domain-containing proteins. The sequence is that of Palmitoyltransferase SWF1 (SWF1) from Eremothecium gossypii (strain ATCC 10895 / CBS 109.51 / FGSC 9923 / NRRL Y-1056) (Yeast).